We begin with the raw amino-acid sequence, 232 residues long: Large ribosomal subunit protein uL1 (232 aa).

This sequence belongs to the universal ribosomal protein uL1 family. As to quaternary structure, part of the 50S ribosomal subunit.

Binds directly to 23S rRNA. The L1 stalk is quite mobile in the ribosome, and is involved in E site tRNA release. Functionally, protein L1 is also a translational repressor protein, it controls the translation of the L11 operon by binding to its mRNA. This is Large ribosomal subunit protein uL1 from Thermosipho melanesiensis (strain DSM 12029 / CIP 104789 / BI429).